The following is a 137-amino-acid chain: Large ribosomal subunit protein uL16 (137 aa).

This sequence belongs to the universal ribosomal protein uL16 family. Part of the 50S ribosomal subunit.

Its function is as follows. Binds 23S rRNA and is also seen to make contacts with the A and possibly P site tRNAs. The sequence is that of Large ribosomal subunit protein uL16 from Lawsonia intracellularis (strain PHE/MN1-00).